The following is a 144-amino-acid chain: uncharacterized protein (144 aa).

Transmembrane regions (helical) follow at residues 7–29, 51–73, 85–107, and 122–139; these read FPAS…RDLV, VAIG…FLLV, AVLA…VGAF, and HLHH…LIFV.

The protein localises to the cell membrane. This is an uncharacterized protein from Treponema pallidum (strain Nichols).